A 180-amino-acid polypeptide reads, in one-letter code: ATP synthase subunit delta (180 aa).

The protein belongs to the ATPase delta chain family. As to quaternary structure, F-type ATPases have 2 components, F(1) - the catalytic core - and F(0) - the membrane proton channel. F(1) has five subunits: alpha(3), beta(3), gamma(1), delta(1), epsilon(1). F(0) has three main subunits: a(1), b(2) and c(10-14). The alpha and beta chains form an alternating ring which encloses part of the gamma chain. F(1) is attached to F(0) by a central stalk formed by the gamma and epsilon chains, while a peripheral stalk is formed by the delta and b chains.

It is found in the cell inner membrane. In terms of biological role, f(1)F(0) ATP synthase produces ATP from ADP in the presence of a proton or sodium gradient. F-type ATPases consist of two structural domains, F(1) containing the extramembraneous catalytic core and F(0) containing the membrane proton channel, linked together by a central stalk and a peripheral stalk. During catalysis, ATP synthesis in the catalytic domain of F(1) is coupled via a rotary mechanism of the central stalk subunits to proton translocation. Its function is as follows. This protein is part of the stalk that links CF(0) to CF(1). It either transmits conformational changes from CF(0) to CF(1) or is implicated in proton conduction. This is ATP synthase subunit delta from Acidovorax sp. (strain JS42).